Consider the following 146-residue polypeptide: ATP synthase epsilon chain (146 aa).

The interval 102 to 122 is disordered; that stretch reads QSAKKRAEQHMQEAKEKHNER.

It belongs to the ATPase epsilon chain family. As to quaternary structure, F-type ATPases have 2 components, CF(1) - the catalytic core - and CF(0) - the membrane proton channel. CF(1) has five subunits: alpha(3), beta(3), gamma(1), delta(1), epsilon(1). CF(0) has three main subunits: a, b and c.

It is found in the cell membrane. Its function is as follows. Produces ATP from ADP in the presence of a proton gradient across the membrane. The chain is ATP synthase epsilon chain from Lactobacillus gasseri (strain ATCC 33323 / DSM 20243 / BCRC 14619 / CIP 102991 / JCM 1131 / KCTC 3163 / NCIMB 11718 / NCTC 13722 / AM63).